Here is a 74-residue protein sequence, read N- to C-terminus: Antimicrobial peptide HsAp2 (74 aa).

An N-terminal signal peptide occupies residues 1 to 21 (MSRRLILILVLVAMLVKTMAG). The propeptide occupies 22–33 (MESKWVETTYEI). The residue at position 65 (proline 65) is a Proline amide. The propeptide occupies 69–74 (AISEQT).

Belongs to the non-disulfide-bridged peptide (NDBP) superfamily. Medium-length antimicrobial peptide (group 3) family. As to expression, expressed by the venom gland.

Its subcellular location is the secreted. The protein localises to the target cell membrane. In terms of biological role, possesses antimicrobial activity against both Gram-negative and Gram-positive bacteria, as well as against the fungus C.tropicalis. Also possesses a relatively high hemolytic activity. May act by disrupting the integrity of the bacterial cell membrane. The chain is Antimicrobial peptide HsAp2 from Heterometrus spinifer (Asia giant forest scorpion).